The chain runs to 523 residues: Protein tweety homolog 3 (523 aa).

The Extracellular segment spans residues 1 to 42; that stretch reads MAGVSYAAPWWVSLLHRLPHFDLSWEATSSQFRPEDTDYQQA. A helical transmembrane segment spans residues 43–63; the sequence is LLLLGAAALACLALDLLFLLF. Over 64 to 86 the chain is Cytoplasmic; sequence YSFWLCCRRRKSEEHLDADCCCT. A helical membrane pass occupies residues 87-107; it reads AWCVIIATLVCSAGIAVGFYG. The Extracellular portion of the chain corresponds to 108–211; sequence NGETSDGIHR…VDLYDWYRWL (104 aa). Ca(2+) is bound by residues Glu-110 and Asp-113. Residues Asn-126 and Asn-144 are each glycosylated (N-linked (GlcNAc...) asparagine). The helical transmembrane segment at 212-232 threads the bilayer; sequence GYLGLLLLDVIICLLVLVGLI. Residues 233-236 lie on the Cytoplasmic side of the membrane; the sequence is RSSK. A helical membrane pass occupies residues 237–257; the sequence is GILVGVCLLGVLALVISWGAL. The Extracellular segment spans residues 258-386; it reads GLELAVSVGS…LTGFCYDGVE (129 aa). Cystine bridges form between Cys-271/Cys-381 and Cys-299/Cys-366. A glycan (N-linked (GlcNAc...) asparagine) is linked at Asn-351. The helical transmembrane segment at 387–407 threads the bilayer; the sequence is GLIYLALFSFVTALMFSSIVC. Topologically, residues 408-523 are cytoplasmic; sequence SVPHTWQQKR…QPRPDSSGSH (116 aa). Disordered regions lie at residues 413-435 and 482-523; these read WQQK…RQAH and QNPR…SGSH. At Ser-496 the chain carries Phosphoserine. The PY-motif; mediates interaction with NEDD4L signature appears at 498–501; sequence PPSY. A compositionally biased stretch (polar residues) spans 501-523; that stretch reads YTSSMRAKYLATSQPRPDSSGSH. Phosphoserine is present on residues Ser-504 and Ser-522.

This sequence belongs to the tweety family. Homotetramer; disulfide-linked. Homodimer. Interacts with NEDD4L. In terms of processing, ubiquitinated by NEDD4L. Post-translationally, N-Glycosylated. Contains high-mannose, hybrid and complex oligosaccharides. Expressed in excitable tissues. Expressed in the brain, heart, skeletal muscle, colon, spleen, kidney and peripheral blood leukocytes.

It localises to the cell membrane. It catalyses the reaction chloride(in) = chloride(out). The enzyme catalyses L-glutamate(out) = L-glutamate(in). In terms of biological role, calcium-independent, swelling-dependent volume-regulated anion channel (VRAC-swell) which plays a pivotal role in the process of regulatory volume decrease (RVD) in the brain through the efflux of anions like chloride and organic osmolytes like glutamate. Probable large-conductance Ca(2+)-activated chloride channel. The polypeptide is Protein tweety homolog 3 (TTYH3) (Homo sapiens (Human)).